The chain runs to 258 residues: MTFLAIDVGNTRLKWALFDAAQPGAGLLAHGAEFLDHIERLAEGPWSHLPAPRHMLGCVVAGDAVKRRVAEQMELWDVPARWVVPSAQEAGVINGYDHPTRLGADRWVAMIGARHRLLAQGPARPLIVVMVGTAVTVEALDAEGRFLGGLILPGHGIMLRALESGTAGLHVPTGEVRLFPSNTSDALTSGGTYAIAGAVERMYQHLRQHCGQEPACMMTGGAGWKMAPSMTRPFELVENLIFDGLLEIAARRFAELPA.

ATP is bound at residue 7–14; it reads DVGNTRLK. Residues Tyr96 and 103-106 contribute to the substrate site; that span reads GADR. The active-site Proton acceptor is the Asp105. ATP is bound at residue Thr133. Thr183 lines the substrate pocket.

This sequence belongs to the type III pantothenate kinase family. Homodimer. NH4(+) serves as cofactor. Requires K(+) as cofactor.

It localises to the cytoplasm. It carries out the reaction (R)-pantothenate + ATP = (R)-4'-phosphopantothenate + ADP + H(+). It participates in cofactor biosynthesis; coenzyme A biosynthesis; CoA from (R)-pantothenate: step 1/5. Its function is as follows. Catalyzes the phosphorylation of pantothenate (Pan), the first step in CoA biosynthesis. In Acidovorax ebreus (strain TPSY) (Diaphorobacter sp. (strain TPSY)), this protein is Type III pantothenate kinase.